The primary structure comprises 259 residues: Phosphatidylglycerol--prolipoprotein diacylglyceryl transferase (259 aa).

Helical transmembrane passes span 10–30 (IGLLEIRWYSLAYIIGILFAY), 50–70 (IISWWVTGMILGGRIGYILFY), 86–106 (WKGGMSFHGASLGLFCTMYIF), and 112–132 (IKFLSAIDLCLCAVPVGIFLG). Residue Arg133 participates in a 1,2-diacyl-sn-glycero-3-phospho-(1'-sn-glycerol) binding. The next 3 membrane-spanning stretches (helical) occupy residues 169–189 (LYEAFFEGLLLFVVMNLLFFF), 197–217 (GMLFSIFMIWYGIVRFFIEFV), and 227–247 (ILFNWITMGQLLSFIMVILGI).

The protein belongs to the Lgt family.

The protein resides in the cell inner membrane. The enzyme catalyses L-cysteinyl-[prolipoprotein] + a 1,2-diacyl-sn-glycero-3-phospho-(1'-sn-glycerol) = an S-1,2-diacyl-sn-glyceryl-L-cysteinyl-[prolipoprotein] + sn-glycerol 1-phosphate + H(+). Its pathway is protein modification; lipoprotein biosynthesis (diacylglyceryl transfer). Catalyzes the transfer of the diacylglyceryl group from phosphatidylglycerol to the sulfhydryl group of the N-terminal cysteine of a prolipoprotein, the first step in the formation of mature lipoproteins. The protein is Phosphatidylglycerol--prolipoprotein diacylglyceryl transferase of Ehrlichia ruminantium (strain Welgevonden).